We begin with the raw amino-acid sequence, 343 residues long: MSKKITIVDTTLRDGMSSVSHQFTPQNVADIARGLDKAGVPTIEVAHGIGLGASSIQYGFAAATDPDYVRAAVDAVENADIAALYVPGIATLAELQQAIDAGIKTVRVAVHCTEADCGQQPVEWAKEHGLTVMTFLMMSHKLDPQPLAEQAAKLDSYGADVVYVVDSAGAMVPRHAGERVAALRQAITADIGFHAHNNLGVGIANALTAAENGATFIDGSLRGLGASAGNAQTEVLAAAFERAGWDTGVDLFPLIDTAEHVVAPLMKEPQIVDETALVLGYAGVYSTFFHPTKRAAKKFGVPARDILMELGRRGVIGGQEDMIIDVASELAGRTYETPAPAGV.

A Pyruvate carboxyltransferase domain is found at Ile5–Ile255. Substrate contacts are provided by residues Arg13–Asp14, Ser167, and His194. Asp14 contributes to the Mn(2+) binding site. His194 and His196 together coordinate Mn(2+). Tyr285 is a substrate binding site.

It belongs to the 4-hydroxy-2-oxovalerate aldolase family.

It catalyses the reaction (S)-4-hydroxy-2-oxopentanoate = acetaldehyde + pyruvate. The sequence is that of 4-hydroxy-2-oxovalerate aldolase 2 from Rhodococcus jostii (strain RHA1).